Here is a 1072-residue protein sequence, read N- to C-terminus: Integrator complex subunit 3 homolog (1072 aa).

Disordered stretches follow at residues 920-941 (YPSSSPNKRKRPPKGISVSTSI) and 1002-1072 (DTTV…NDSD). Phosphoserine is present on residues serine 1042, serine 1043, serine 1047, and serine 1048.

The protein belongs to the Integrator subunit 3 family. In terms of assembly, belongs to the multiprotein complex Integrator, at least composed of IntS1, IntS2, IntS3, IntS4, omd/IntS5, IntS6, defl/IntS7, IntS8, IntS9, IntS10, IntS11, IntS12, asun/IntS13, IntS14 and IntS15. The core complex associates with protein phosphatase 2A subunits mts/PP2A and Pp2A-29B, to form the Integrator-PP2A (INTAC) complex.

It is found in the nucleus. It localises to the cytoplasm. Its function is as follows. Component of the integrator complex, a multiprotein complex that terminates RNA polymerase II (Pol II) transcription in the promoter-proximal region of genes. The integrator complex provides a quality checkpoint during transcription elongation by driving premature transcription termination of transcripts that are unfavorably configured for transcriptional elongation: the complex terminates transcription by (1) catalyzing dephosphorylation of the C-terminal domain (CTD) of Pol II subunit Polr2A/Rbp1 and Spt5, and (2) degrading the exiting nascent RNA transcript via endonuclease activity. The integrator complex is also involved in the 3'-end processing of the U7 snRNA, and also the spliceosomal snRNAs U1, U2, U4 and U5. This is Integrator complex subunit 3 homolog (IntS3) from Drosophila erecta (Fruit fly).